The sequence spans 251 residues: Uridylate kinase (251 aa).

Position 26–29 (26–29 (KLGG)) interacts with ATP. Residue G67 participates in UMP binding. ATP-binding residues include G68 and R72. Residues D87 and 148–155 (MGLPYFST) each bind UMP. ATP contacts are provided by F181 and D184.

The protein belongs to the UMP kinase family. As to quaternary structure, homohexamer.

The protein resides in the cytoplasm. The enzyme catalyses UMP + ATP = UDP + ADP. It functions in the pathway pyrimidine metabolism; CTP biosynthesis via de novo pathway; UDP from UMP (UMPK route): step 1/1. Its activity is regulated as follows. Inhibited by UTP. Its function is as follows. Catalyzes the reversible phosphorylation of UMP to UDP. The sequence is that of Uridylate kinase from Mycolicibacterium vanbaalenii (strain DSM 7251 / JCM 13017 / BCRC 16820 / KCTC 9966 / NRRL B-24157 / PYR-1) (Mycobacterium vanbaalenii).